Reading from the N-terminus, the 217-residue chain is Probable coenzyme A transferase subunit beta (217 aa).

Glu-50 is an active-site residue.

Belongs to the 3-oxoacid CoA-transferase subunit B family. In terms of assembly, heterodimer of a subunit alpha and a subunit beta.

This chain is Probable coenzyme A transferase subunit beta (yodR), found in Bacillus subtilis (strain 168).